A 296-amino-acid chain; its full sequence is Porphobilinogen deaminase (296 aa).

Cysteine 235 bears the S-(dipyrrolylmethanemethyl)cysteine mark.

This sequence belongs to the HMBS family. In terms of assembly, monomer. It depends on dipyrromethane as a cofactor.

It catalyses the reaction 4 porphobilinogen + H2O = hydroxymethylbilane + 4 NH4(+). The protein operates within porphyrin-containing compound metabolism; protoporphyrin-IX biosynthesis; coproporphyrinogen-III from 5-aminolevulinate: step 2/4. Functionally, tetrapolymerization of the monopyrrole PBG into the hydroxymethylbilane pre-uroporphyrinogen in several discrete steps. This is Porphobilinogen deaminase from Alkaliphilus oremlandii (strain OhILAs) (Clostridium oremlandii (strain OhILAs)).